Consider the following 239-residue polypeptide: Ribonuclease P protein component 3 (239 aa).

The protein belongs to the eukaryotic/archaeal RNase P protein component 3 family. Consists of a catalytic RNA component and at least 4-5 protein subunits.

It localises to the cytoplasm. It carries out the reaction Endonucleolytic cleavage of RNA, removing 5'-extranucleotides from tRNA precursor.. In terms of biological role, part of ribonuclease P, a protein complex that generates mature tRNA molecules by cleaving their 5'-ends. The polypeptide is Ribonuclease P protein component 3 (Methanosarcina barkeri (strain Fusaro / DSM 804)).